A 279-amino-acid chain; its full sequence is tRNA (guanine-N(1)-)-methyltransferase (279 aa).

S-adenosyl-L-methionine contacts are provided by residues Gly132 and 152 to 157 (IGDYVL).

Belongs to the RNA methyltransferase TrmD family. In terms of assembly, homodimer.

The protein localises to the cytoplasm. It carries out the reaction guanosine(37) in tRNA + S-adenosyl-L-methionine = N(1)-methylguanosine(37) in tRNA + S-adenosyl-L-homocysteine + H(+). Specifically methylates guanosine-37 in various tRNAs. This is tRNA (guanine-N(1)-)-methyltransferase from Saccharophagus degradans (strain 2-40 / ATCC 43961 / DSM 17024).